Here is a 523-residue protein sequence, read N- to C-terminus: NADH-ubiquinone oxidoreductase chain 2 (523 aa).

The next 14 membrane-spanning stretches (helical) occupy residues 3 to 23, 30 to 50, 62 to 82, 110 to 130, 135 to 155, 170 to 190, 212 to 232, 246 to 266, 281 to 301, 306 to 326, 333 to 353, 386 to 406, 419 to 439, and 490 to 510; these read LFGVLTMILAIALFSLRIPAI, IILLLFSALLSYNSLYMNNIG, VTTITQSIDVFIYLLGALVLL, SVLAEYPLIALFSVLGMSSLI, LISMFLSIELQSFAVYILATI, FLLGSLSSALILLGSSLLYSF, IEISVLLIMVGLLFKVSAAPF, VVTTWLTTMPKIAFLVFILEF, LLLISSLLSLLIGTIGGLAQY, LLTYSTISHVGFLLLALAINN, FLFYLIQYSLTNINVFFILVA, GLSLAICLFSMAGIPPLVGFF, GNFFLAFVAILVSVVSAAYYL, and LVIATITLLLIFFIINPTPLL.

The protein belongs to the complex I subunit 2 family.

Its subcellular location is the mitochondrion inner membrane. The catalysed reaction is a ubiquinone + NADH + 5 H(+)(in) = a ubiquinol + NAD(+) + 4 H(+)(out). Core subunit of the mitochondrial membrane respiratory chain NADH dehydrogenase (Complex I) that is believed to belong to the minimal assembly required for catalysis. Complex I functions in the transfer of electrons from NADH to the respiratory chain. The immediate electron acceptor for the enzyme is believed to be ubiquinone. This chain is NADH-ubiquinone oxidoreductase chain 2, found in Rhizopus oryzae (Mucormycosis agent).